Here is a 170-residue protein sequence, read N- to C-terminus: Putative 4-hydroxy-4-methyl-2-oxoglutarate aldolase (170 aa).

Residues 85 to 88 (GDMI) and Arg107 contribute to the substrate site. Residue Asp108 participates in a divalent metal cation binding.

The protein belongs to the class II aldolase/RraA-like family. Homotrimer. Requires a divalent metal cation as cofactor.

The catalysed reaction is 4-hydroxy-4-methyl-2-oxoglutarate = 2 pyruvate. It carries out the reaction oxaloacetate + H(+) = pyruvate + CO2. Its function is as follows. Catalyzes the aldol cleavage of 4-hydroxy-4-methyl-2-oxoglutarate (HMG) into 2 molecules of pyruvate. Also contains a secondary oxaloacetate (OAA) decarboxylase activity due to the common pyruvate enolate transition state formed following C-C bond cleavage in the retro-aldol and decarboxylation reactions. The polypeptide is Putative 4-hydroxy-4-methyl-2-oxoglutarate aldolase (Acinetobacter baylyi (strain ATCC 33305 / BD413 / ADP1)).